Consider the following 674-residue polypeptide: DNA mismatch repair protein MutL (674 aa).

Belongs to the DNA mismatch repair MutL/HexB family.

Its function is as follows. This protein is involved in the repair of mismatches in DNA. It is required for dam-dependent methyl-directed DNA mismatch repair. May act as a 'molecular matchmaker', a protein that promotes the formation of a stable complex between two or more DNA-binding proteins in an ATP-dependent manner without itself being part of a final effector complex. The sequence is that of DNA mismatch repair protein MutL from Clostridium perfringens (strain ATCC 13124 / DSM 756 / JCM 1290 / NCIMB 6125 / NCTC 8237 / Type A).